A 2367-amino-acid polypeptide reads, in one-letter code: Toxin B (2367 aa).

A four-helical bundle region spans residues 2–91; sequence SLVNRKQLEK…EILELKNSNL (90 aa). Residues 96–469 form the GT44 domain; it reads KNLHFIWIGG…YPEANTTITL (374 aa). The tract at residues 96 to 469 is glucosyltransferase region; the sequence is KNLHFIWIGG…YPEANTTITL (374 aa). UDP-alpha-D-glucose is bound by residues 101 to 103, N139, 269 to 273, and 286 to 288; these read IWI, SDILR, and DVD. Residues D286, D288, and E516 each contribute to the Mg(2+) site. 519–521 lines the UDP-alpha-D-glucose pocket; sequence SLW. An autoprocessing region region spans residues 545–800; it reads GEDDNLDFSQ…KSKNLPELST (256 aa). Zn(2+) contacts are provided by E546 and D547. In terms of domain architecture, Peptidase C80 spans 568–775; the sequence is SSSTKSSERG…EESIIKDISS (208 aa). Positions 578, 601, and 648 each coordinate 1D-myo-inositol hexakisphosphate. Residue H654 coordinates Zn(2+). The active-site For protease activity is H654. C699 functions as the Nucleophile; for protease activity in the catalytic mechanism. H758 contacts Zn(2+). 1D-myo-inositol hexakisphosphate contacts are provided by K765, K776, and K793. The tract at residues 801-1501 is translocation region; it reads LLQEIRNNSN…VVLIIKVYMD (701 aa). Interaction with host frizzled receptors FZD1, FZD2 and FZD7 regions lie at residues 1434–1439, 1487–1512, and 1598–1600; these read LKTLMA, SELSDVVLIIKVYMDNSKPPFGYYSN, and SLK. 19 Cell wall-binding repeats span residues 1833-1852, 1854-1873, 1876-1895, 1926-1945, 1946-1965, 1967-1986, 1987-2006, 2007-2026, 2057-2076, 2077-2097, 2099-2118, 2119-2138, 2139-2158, 2209-2231, 2233-2252, 2253-2272, 2273-2292, 2323-2342, and 2343-2362; these read VSGLVYINDSLYYFKPPIKN, ITGFTTIGDDKYYFNPDNGG, SVGETIIDGKNYYFSQNGVL, FTGKLIIDENVYYFGDNYRA, AIEWQTLDDEVYYFSTDTGR, FKGLNQIGDDKFYFNSDGIM, QKGFVNINDKTFYFDDSGVM, KSGYTEIDGRYFYFAENGEM, YSGILNFNNKIYYFDDSFTA, VVGWKDLEDGSKYYFDENTAE, SIGISIINDGKYYFNDSGIM, QIGFVTINNEVFYFSDSGIV, ESGMQNIDDNYFYISENGLV, ETGWIYDSENESDKYYFDPEAKK, YKGINVIDDIKYYFDENGIM, RTGLITFEDNHYYFNEDGEM, QYGYLNIEDKMFYFSEDGIM, YTGWLDLDEKRYYFTDEYIA, and ATGSVIIDGEEYYFDPDTAQ. The receptor-binding (CROPS) region stretch occupies residues 1835–2367; sequence GLVYINDSLY…PDTAQLVISE (533 aa).

The protein belongs to the clostridial glucosylating toxin (LCGT) family. Interacts with host FZD1. Interacts with host FZD2; interaction promotes toxin entry into host cell and occupies the binding site for Wnt-adducted palmitoleate in FZD2, leading to prevent Wnt-binding and downstream Wnt signaling. Interacts with host FZD7. Interacts with host CSPG4. Interacts with host NECTIN3/PVRL3. The cofactor is Zn(2+). Requires Mn(2+) as cofactor. Mg(2+) serves as cofactor. Undergoes autocatalytic cleavage to release the N-terminal part (Glucosyltransferase TcdB), which constitutes the active part of the toxin, in the host cytosol. 1D-myo-inositol hexakisphosphate-binding (InsP6) activates the peptidase C80 domain and promotes autoprocessing.

The protein localises to the secreted. It localises to the host endosome membrane. Its subcellular location is the host cytoplasm. It is found in the host cytosol. The protein resides in the host cell membrane. It catalyses the reaction L-threonyl-[protein] + UDP-alpha-D-glucose = 3-O-(alpha-D-glucosyl)-L-threonyl-[protein] + UDP + H(+). Protease activity is activated upon binding to 1D-myo-inositol hexakisphosphate (InsP6), which induces conformational reorganization. In terms of biological role, precursor of a cytotoxin that targets and disrupts the colonic epithelium, inducing the host inflammatory and innate immune responses and resulting in diarrhea and pseudomembranous colitis. TcdB constitutes the main toxin that mediates the pathology of C.difficile infection, an opportunistic pathogen that colonizes the colon when the normal gut microbiome is disrupted. Compared to TcdA, TcdB is more virulent and more important for inducing the host inflammatory and innate immune responses. This form constitutes the precursor of the toxin: it enters into host cells and mediates autoprocessing to release the active toxin (Glucosyltransferase TcdB) into the host cytosol. Targets colonic epithelia by binding to the frizzled receptors FZD1, FZD2 and FZD7, and enters host cells via clathrin-mediated endocytosis. Frizzled receptors constitute the major host receptors in the colonic epithelium, but other receptors, such as CSPG4 or NECTIN3/PVRL3, have been identified. Binding to carbohydrates and sulfated glycosaminoglycans on host cell surface also contribute to entry into cells. Once entered into host cells, acidification in the endosome promotes the membrane insertion of the translocation region and formation of a pore, leading to translocation of the GT44 and peptidase C80 domains across the endosomal membrane. This activates the peptidase C80 domain and autocatalytic processing, releasing the N-terminal part (Glucosyltransferase TcdB), which constitutes the active part of the toxin, in the cytosol. Active form of the toxin, which is released into the host cytosol following autoprocessing and inactivates small GTPases. Acts by mediating monoglucosylation of small GTPases of the Rho family (Rac1, RhoA, RhoB, RhoC, RhoG and Cdc42) in host cells at the conserved threonine residue located in the switch I region ('Thr-37/35'), using UDP-alpha-D-glucose as the sugar donor. Monoglucosylation of host small GTPases completely prevents the recognition of the downstream effector, blocking the GTPases in their inactive form, leading to actin cytoskeleton disruption and cell death, resulting in the loss of colonic epithelial barrier function. In Clostridioides difficile (Peptoclostridium difficile), this protein is Toxin B.